We begin with the raw amino-acid sequence, 36 residues long: Pancreatic polypeptide (36 aa).

Tyr36 carries the post-translational modification Tyrosine amide.

It belongs to the NPY family.

Its subcellular location is the secreted. Functionally, hormone secreted by pancreatic cells that acts as a regulator of pancreatic and gastrointestinal functions. The chain is Pancreatic polypeptide (PPY) from Larus argentatus (Herring gull).